The primary structure comprises 1332 residues: Elongator complex protein 1 (1332 aa).

Residues serine 471, serine 804, serine 867, serine 1171, and serine 1174 each carry the phosphoserine modification. Positions 885–1332 (VDVNELYDHS…RTQWKLSLLD (448 aa)) are mediates dimerization. Residues 1150-1208 (QAGLDDEVPHGQESDLFSETSSVVSGSEMSGKYSHSNSRISARSSKNRRKAERKKHSLK) are disordered. Residues 1164–1177 (DLFSETSSVVSGSE) show a composition bias toward polar residues. Residues 1191–1209 (ARSSKNRRKAERKKHSLKE) are required for binding to tRNA. Residues 1194–1206 (SKNRRKAERKKHS) show a composition bias toward basic residues.

The protein belongs to the ELP1/IKA1 family. In terms of assembly, homodimer; dimerization promotes ELP1 stability and elongator complex formation. Component of the elongator complex which consists of ELP1, ELP2, ELP3, ELP4, ELP5 and ELP6. Interacts preferentially with MAP3K14/NIK followed by IKK-alpha and IKK-beta.

The protein localises to the cytoplasm. It is found in the nucleus. The protein operates within tRNA modification; 5-methoxycarbonylmethyl-2-thiouridine-tRNA biosynthesis. Functionally, component of the elongator complex which is required for multiple tRNA modifications, including mcm5U (5-methoxycarbonylmethyl uridine), mcm5s2U (5-methoxycarbonylmethyl-2-thiouridine), and ncm5U (5-carbamoylmethyl uridine). The elongator complex catalyzes the formation of carboxymethyluridine in the wobble base at position 34 in tRNAs. Regulates the migration and branching of projection neurons in the developing cerebral cortex, through a process depending on alpha-tubulin acetylation. ELP1 binds to tRNA, mediating interaction of the elongator complex with tRNA. May act as a scaffold protein that assembles active IKK-MAP3K14 complexes (IKKA, IKKB and MAP3K14/NIK). The protein is Elongator complex protein 1 of Homo sapiens (Human).